Consider the following 188-residue polypeptide: Protein GrpE (188 aa).

The protein belongs to the GrpE family. As to quaternary structure, homodimer.

The protein localises to the cytoplasm. Participates actively in the response to hyperosmotic and heat shock by preventing the aggregation of stress-denatured proteins, in association with DnaK and GrpE. It is the nucleotide exchange factor for DnaK and may function as a thermosensor. Unfolded proteins bind initially to DnaJ; upon interaction with the DnaJ-bound protein, DnaK hydrolyzes its bound ATP, resulting in the formation of a stable complex. GrpE releases ADP from DnaK; ATP binding to DnaK triggers the release of the substrate protein, thus completing the reaction cycle. Several rounds of ATP-dependent interactions between DnaJ, DnaK and GrpE are required for fully efficient folding. This is Protein GrpE from Chromobacterium violaceum (strain ATCC 12472 / DSM 30191 / JCM 1249 / CCUG 213 / NBRC 12614 / NCIMB 9131 / NCTC 9757 / MK).